A 111-amino-acid chain; its full sequence is Probable 4-amino-4-deoxy-L-arabinose-phosphoundecaprenol flippase subunit ArnE (111 aa).

Transmembrane regions (helical) follow at residues Leu38 to Leu58, Leu61 to Ala81, and Pro91 to Ala111. Residues Leu40–Ser109 enclose the EamA domain.

The protein belongs to the ArnE family. Heterodimer of ArnE and ArnF.

It localises to the cell inner membrane. It participates in bacterial outer membrane biogenesis; lipopolysaccharide biosynthesis. Its function is as follows. Translocates 4-amino-4-deoxy-L-arabinose-phosphoundecaprenol (alpha-L-Ara4N-phosphoundecaprenol) from the cytoplasmic to the periplasmic side of the inner membrane. The chain is Probable 4-amino-4-deoxy-L-arabinose-phosphoundecaprenol flippase subunit ArnE from Salmonella heidelberg (strain SL476).